Consider the following 445-residue polypeptide: MARKFFGTDGIRGRTNSGVMTAEIAMKVGQAAGTYFQRGTHRHRVVIGKDTRLSGYMMESAMTAGFTSVGMDVVLLGPMPTPAVAMLTRSMRADLGVMISASHNPFEDNGIKLFGPDGYKLSDEAELTIESMLLQELPLADAAQVGRARRIEDARGRYIHAVKASLPDNVRLDGLRIVVDCANGAAYHVTPSALWELGAEVIAIGVEPNGKNINAGVGSTHLDAIKAKVRETRADIGIALDGDADRLIVVDEKCQTVDGDQIMALIGTQLAARGELRGGGVVATVMSNLGLERHLNAHGLTLERTAVGDRYVLERMRSGGFNVGGEQSGHMILTDHATTGDGTVAALQVLAALVSSGKPASELLHLFDPVPQLLKNVRFTGGKPLEAKSVKEAIAEAEARLAGKGRLVIRPSGTEPLIRVMAEGDDADEVEAVVDQICDAVRKAA.

S102 functions as the Phosphoserine intermediate in the catalytic mechanism. Mg(2+) contacts are provided by S102, D241, D243, and D245. A Phosphoserine modification is found at S102.

It belongs to the phosphohexose mutase family. Mg(2+) is required as a cofactor. Activated by phosphorylation.

It carries out the reaction alpha-D-glucosamine 1-phosphate = D-glucosamine 6-phosphate. Catalyzes the conversion of glucosamine-6-phosphate to glucosamine-1-phosphate. The chain is Phosphoglucosamine mutase from Novosphingobium aromaticivorans (strain ATCC 700278 / DSM 12444 / CCUG 56034 / CIP 105152 / NBRC 16084 / F199).